The primary structure comprises 661 residues: UvrABC system protein B (661 aa).

One can recognise a Helicase ATP-binding domain in the interval 25–182 (AGLSSKKRSQ…NDLINLQYER (158 aa)). 38–45 (GITGSGKT) is a binding site for ATP. The Beta-hairpin motif lies at 91–114 (YYDYYQPEAYIARTDTFIEKDSSI). The Helicase C-terminal domain maps to 430-592 (QVEDLISEIQ…IIPKTINRAI (163 aa)). The UVR domain occupies 621–656 (KTHIDKLKKEMLKAASNLEFEQAVKLRDQLKTLEAA).

Belongs to the UvrB family. In terms of assembly, forms a heterotetramer with UvrA during the search for lesions. Interacts with UvrC in an incision complex.

The protein localises to the cytoplasm. Functionally, the UvrABC repair system catalyzes the recognition and processing of DNA lesions. A damage recognition complex composed of 2 UvrA and 2 UvrB subunits scans DNA for abnormalities. Upon binding of the UvrA(2)B(2) complex to a putative damaged site, the DNA wraps around one UvrB monomer. DNA wrap is dependent on ATP binding by UvrB and probably causes local melting of the DNA helix, facilitating insertion of UvrB beta-hairpin between the DNA strands. Then UvrB probes one DNA strand for the presence of a lesion. If a lesion is found the UvrA subunits dissociate and the UvrB-DNA preincision complex is formed. This complex is subsequently bound by UvrC and the second UvrB is released. If no lesion is found, the DNA wraps around the other UvrB subunit that will check the other stand for damage. The sequence is that of UvrABC system protein B from Rickettsia peacockii (strain Rustic).